Here is a 378-residue protein sequence, read N- to C-terminus: Chorismate synthase (378 aa).

An NADP(+)-binding site is contributed by Arg50. FMN is bound by residues 127 to 129 (RAS), 255 to 256 (NA), Gly300, 315 to 319 (KPTPS), and Arg342.

Belongs to the chorismate synthase family. It depends on FMNH2 as a cofactor.

It catalyses the reaction 5-O-(1-carboxyvinyl)-3-phosphoshikimate = chorismate + phosphate. It participates in metabolic intermediate biosynthesis; chorismate biosynthesis; chorismate from D-erythrose 4-phosphate and phosphoenolpyruvate: step 7/7. In terms of biological role, catalyzes the anti-1,4-elimination of the C-3 phosphate and the C-6 proR hydrogen from 5-enolpyruvylshikimate-3-phosphate (EPSP) to yield chorismate, which is the branch point compound that serves as the starting substrate for the three terminal pathways of aromatic amino acid biosynthesis. This reaction introduces a second double bond into the aromatic ring system. This is Chorismate synthase from Methanocaldococcus jannaschii (strain ATCC 43067 / DSM 2661 / JAL-1 / JCM 10045 / NBRC 100440) (Methanococcus jannaschii).